Here is a 161-residue protein sequence, read N- to C-terminus: Ribosome maturation factor RimP (161 aa).

It belongs to the RimP family.

It localises to the cytoplasm. In terms of biological role, required for maturation of 30S ribosomal subunits. This chain is Ribosome maturation factor RimP, found in Rickettsia rickettsii (strain Iowa).